A 178-amino-acid chain; its full sequence is ATP synthase subunit delta (178 aa).

This sequence belongs to the ATPase delta chain family. In terms of assembly, F-type ATPases have 2 components, F(1) - the catalytic core - and F(0) - the membrane proton channel. F(1) has five subunits: alpha(3), beta(3), gamma(1), delta(1), epsilon(1). F(0) has three main subunits: a(1), b(2) and c(10-14). The alpha and beta chains form an alternating ring which encloses part of the gamma chain. F(1) is attached to F(0) by a central stalk formed by the gamma and epsilon chains, while a peripheral stalk is formed by the delta and b chains.

It is found in the cell inner membrane. In terms of biological role, f(1)F(0) ATP synthase produces ATP from ADP in the presence of a proton or sodium gradient. F-type ATPases consist of two structural domains, F(1) containing the extramembraneous catalytic core and F(0) containing the membrane proton channel, linked together by a central stalk and a peripheral stalk. During catalysis, ATP synthesis in the catalytic domain of F(1) is coupled via a rotary mechanism of the central stalk subunits to proton translocation. This protein is part of the stalk that links CF(0) to CF(1). It either transmits conformational changes from CF(0) to CF(1) or is implicated in proton conduction. The chain is ATP synthase subunit delta from Acinetobacter baylyi (strain ATCC 33305 / BD413 / ADP1).